The primary structure comprises 429 residues: Keratin, type I cytoskeletal 47 kDa (429 aa).

Residues 1 to 16 are compositionally biased toward low complexity; sequence MTSYRSSSASYYSGSS. The segment at 1-20 is disordered; that stretch reads MTSYRSSSASYYSGSSSKGG. The interval 1-69 is head; sequence MTSYRSSSAS…EAASSSFGGN (69 aa). Residues 70–105 are coil 1A; that stretch reads EKHAMQNLNDRLASYLEKVRALEATNSDLEGKIRNW. The region spanning 70-385 is the IF rod domain; it reads EKHAMQNLND…RLLEGELGQV (316 aa). The linker 1 stretch occupies residues 106–127; that stretch reads YDKQSDAGIGAGSKDYSKYFEI. The segment at 128–219 is coil 1B; sequence IAELRNKIRA…KNHEEEMSHA (92 aa). A linker 12 region spans residues 220 to 242; that stretch reads KSQSAGKVSVEMDAALGVDLTSI. A coil 2 region spans residues 243-381; that stretch reads LNNMRADYEI…QTYRRLLEGE (139 aa). The interval 382 to 429 is tail; it reads LGQVTTVANTSSVESKTESSSTSTTRTRMVKTIVEEVVDGKVVSSRVE. Positions 389–408 are disordered; sequence ANTSSVESKTESSSTSTTRT. The span at 391 to 408 shows a compositional bias: low complexity; that stretch reads TSSVESKTESSSTSTTRT.

It belongs to the intermediate filament family. Heterotetramer of two type I and two type II keratins.

In Xenopus laevis (African clawed frog), this protein is Keratin, type I cytoskeletal 47 kDa (xk81a1).